Consider the following 946-residue polypeptide: Protein translocase subunit SecA (946 aa).

ATP-binding positions include Gln-87, Gly-105 to Thr-109, and Asp-524. Residues Pro-904–Gly-933 are disordered. Positions 930, 932, 941, and 942 each coordinate Zn(2+).

Belongs to the SecA family. In terms of assembly, monomer and homodimer. Part of the essential Sec protein translocation apparatus which comprises SecA, SecYEG and auxiliary proteins SecDF-YajC and YidC. Zn(2+) serves as cofactor.

It is found in the cell inner membrane. It localises to the cytoplasm. The catalysed reaction is ATP + H2O + cellular proteinSide 1 = ADP + phosphate + cellular proteinSide 2.. In terms of biological role, part of the Sec protein translocase complex. Interacts with the SecYEG preprotein conducting channel. Has a central role in coupling the hydrolysis of ATP to the transfer of proteins into and across the cell membrane, serving both as a receptor for the preprotein-SecB complex and as an ATP-driven molecular motor driving the stepwise translocation of polypeptide chains across the membrane. The sequence is that of Protein translocase subunit SecA from Rhodopseudomonas palustris (strain TIE-1).